The following is a 570-amino-acid chain: Sulfite reductase [NADPH] hemoprotein beta-component (570 aa).

Residues C434, C440, C479, and C483 each coordinate [4Fe-4S] cluster. C483 provides a ligand contact to siroheme.

This sequence belongs to the nitrite and sulfite reductase 4Fe-4S domain family. Alpha(8)-beta(8). The alpha component is a flavoprotein, the beta component is a hemoprotein. Siroheme serves as cofactor. It depends on [4Fe-4S] cluster as a cofactor.

The catalysed reaction is hydrogen sulfide + 3 NADP(+) + 3 H2O = sulfite + 3 NADPH + 4 H(+). It functions in the pathway sulfur metabolism; hydrogen sulfide biosynthesis; hydrogen sulfide from sulfite (NADPH route): step 1/1. Functionally, component of the sulfite reductase complex that catalyzes the 6-electron reduction of sulfite to sulfide. This is one of several activities required for the biosynthesis of L-cysteine from sulfate. The polypeptide is Sulfite reductase [NADPH] hemoprotein beta-component (Escherichia coli (strain ATCC 8739 / DSM 1576 / NBRC 3972 / NCIMB 8545 / WDCM 00012 / Crooks)).